A 129-amino-acid chain; its full sequence is Small ribosomal subunit protein uS11 (129 aa).

This sequence belongs to the universal ribosomal protein uS11 family. As to quaternary structure, part of the 30S ribosomal subunit. Interacts with proteins S7 and S18. Binds to IF-3.

Located on the platform of the 30S subunit, it bridges several disparate RNA helices of the 16S rRNA. Forms part of the Shine-Dalgarno cleft in the 70S ribosome. This Sodalis glossinidius (strain morsitans) protein is Small ribosomal subunit protein uS11.